Here is a 159-residue protein sequence, read N- to C-terminus: Protein-export protein SecB (159 aa).

It belongs to the SecB family. As to quaternary structure, homotetramer, a dimer of dimers. One homotetramer interacts with 1 SecA dimer.

It is found in the cytoplasm. Functionally, one of the proteins required for the normal export of preproteins out of the cell cytoplasm. It is a molecular chaperone that binds to a subset of precursor proteins, maintaining them in a translocation-competent state. It also specifically binds to its receptor SecA. This is Protein-export protein SecB from Burkholderia mallei (strain NCTC 10229).